A 688-amino-acid polypeptide reads, in one-letter code: Protein sel-1 homolog 2 (688 aa).

A signal peptide spans 1–18 (MNPLALLVEILIIIEVTT). Topologically, residues 19-662 (KNTEAERYNR…KWKWLKLDST (644 aa)) are extracellular. N-linked (GlcNAc...) asparagine glycosylation occurs at N34. Sel1-like repeat units lie at residues 107–142 (GDELFKMGNKILQESKSQKQKTEAYTLFTRAANMGN), 143–178 (LKAMEKMADAWLFGSFGMQNITAAIQLYESLAKEGS), 179–214 (YKAQNALGFLSSYGIGMEYDQAKALIYYTFGSAGGS), 215–250 (MMSQMILGYRYLSGINVLQNCEVALNHYKKVADYIA), 297–333 (VQIQVSLGQLHLIGRKGLDQDYSKALYYFLKAAKAGS), 334–370 (ANAMAFIGKMYFEGNAAAPQNNATAFKYFSMAASKGN), 371–406 (AIGLHGLGLLYFHGKGVPVNYGEALKYFQKAAEKGW), 407–442 (PNAQFQLGFMYYSGSGVWKDYKLAFKYFYLASQSGQ), 443–478 (PLAIYYLAEMYATGTGVLRSCRTAVELYKGVCELGH), 551–586 (AFARVKIGDYHYYGYGTKKDYETAATHYSIAADKHH), and 588–623 (AQAMFNLAYMYEHGLGIAKDIHLARRLYDMAAQTSP). An N-linked (GlcNAc...) asparagine glycan is attached at N162. A helical membrane pass occupies residues 663–683 (VGPYWDLLVIGLIVAMLIFLL). Over 684–688 (RNRHR) the chain is Cytoplasmic.

The protein belongs to the sel-1 family.

The protein localises to the membrane. Its subcellular location is the cell projection. The protein resides in the cilium. It is found in the nucleus speckle. The sequence is that of Protein sel-1 homolog 2 (Sel1l2) from Mus musculus (Mouse).